A 217-amino-acid polypeptide reads, in one-letter code: MPPVCGRRCSRTGEVRRYPGSFVRKWKRVETANGPRFRSVVAPHEVALLKHLVGALLGLLNERESSSPLDELEVITGIKAGNAQRPEDPTLRRLLPDFYTPDDKDQLDPAALDAVDSLNAALRSLHEPEIVDAKRSAAQQLLDTLPESDGRLELTEASANAWIAAVNDLRLALGVILEIDRPAPERVPAGHPLSVHFDVYQWLTVLQEYLVLALMAT.

A CXXXC motif is present at residues 5-9 (CGRRC). C5 and C9 are oxidised to a cystine.

It belongs to the AosR family.

The sequence is that of Putative oxidative stress regulator AosR from Mycobacterium leprae (strain TN).